A 41-amino-acid polypeptide reads, in one-letter code: Large ribosomal subunit protein bL36 (41 aa).

Belongs to the bacterial ribosomal protein bL36 family.

This chain is Large ribosomal subunit protein bL36, found in Neisseria gonorrhoeae (strain ATCC 700825 / FA 1090).